The sequence spans 274 residues: Uridine-5'-phosphate dioxygenase (274 aa).

Positions 103, 105, and 246 each coordinate Fe cation.

It depends on Fe(2+) as a cofactor.

It carries out the reaction UMP + 2-oxoglutarate + O2 = uridine-5'-aldehyde + succinate + phosphate + CO2. Its pathway is antibiotic biosynthesis. Inhibited by several divalent cations, including Zn(2+). Dioxygenase involved in the biosynthesis of the lipopeptidyl nucleoside antibiotic A-90289. Catalyzes the dephosphorylation and oxidation of UMP to generate uridine-5'-aldehyde, the first intermediate in the biosynthesis of A-90289. This is Uridine-5'-phosphate dioxygenase from Streptomyces sp.